Consider the following 50-residue polypeptide: Protein PsbN (50 aa).

Residues Val14–Phe34 form a helical membrane-spanning segment.

The protein belongs to the PsbN family.

It localises to the cellular thylakoid membrane. Its function is as follows. May play a role in photosystem I and II biogenesis. The sequence is that of Protein PsbN from Prochlorococcus marinus (strain MIT 9515).